The following is a 76-amino-acid chain: Large ribosomal subunit protein eL20 (76 aa).

The protein belongs to the eukaryotic ribosomal protein eL20 family. In terms of assembly, part of the 50S ribosomal subunit. Binds 23S rRNA.

The sequence is that of Large ribosomal subunit protein eL20 from Methanococcus maripaludis (strain C6 / ATCC BAA-1332).